The primary structure comprises 297 residues: NADH-ubiquinone oxidoreductase chain 1 (297 aa).

The next 9 membrane-spanning stretches (helical) occupy residues 1–21, 34–54, 66–86, 99–119, 139–159, 170–190, 206–228, 235–257, and 277–297; these read MKSL…TLAE, PNHV…KLIL, WLFV…WLVI, LSIL…IYTG, VSYE…GATL, GTVL…AALA, LVAG…GEYA, TVLN…IWIR, and LPFL…LDLF.

This sequence belongs to the complex I subunit 1 family.

It localises to the mitochondrion inner membrane. The enzyme catalyses a ubiquinone + NADH + 5 H(+)(in) = a ubiquinol + NAD(+) + 4 H(+)(out). Core subunit of the mitochondrial membrane respiratory chain NADH dehydrogenase (Complex I) that is believed to belong to the minimal assembly required for catalysis. Complex I functions in the transfer of electrons from NADH to the respiratory chain. The immediate electron acceptor for the enzyme is believed to be ubiquinone. The sequence is that of NADH-ubiquinone oxidoreductase chain 1 from Hyaloraphidium curvatum (Lower fungus).